The primary structure comprises 72 residues: Small ribosomal subunit protein bS20 (72 aa).

It belongs to the bacterial ribosomal protein bS20 family.

In terms of biological role, binds directly to 16S ribosomal RNA. This is Small ribosomal subunit protein bS20 (rpsT) from Proteus mirabilis.